Reading from the N-terminus, the 641-residue chain is MEGSGKLAMVEDAVEYHLFLIPDKARGTEEHREILQKYIERIMTQFAPILVPYIWQNQPFNLKYKPAKGGVPAHMYGMTKFGDNIEDEWFIVYVIKQITKEFPELVARVEDNDGEFLLIEAADFLPKWLDPDNSANRVFFHHGELCIIPVPRKSERIPWLPMTPPTIQQALSIISAHPEAVLASESIQAAVDRRVSGYPERVEASLHRAHCFLPAGIVAVLKQQPRLLSAAVQAFYLRDPIDLRACRVFKTFLPETRIMASVTFTKCLYAQLVQQKFVPDRRSGYGLPPPSHPQYRAYELGMKLAHGFEILCSKCSPHFSDSRKSLVTASPLWASFLESLKRNDYFKGLMDGSAQYQERLEMAKNYFQLSIHRPESSLAMSPGEEILTVLQTQPFDVAELKTEEADLPPEDDDQWLDLSPDQLDQLLQDAAGRKESQPGPQKEELQNYDVAQVSDSMKAFISKVSSHKGAELPRDPSEAPITFDADSFLNYFDKILGAKPQESDSEDDPGEEDVEGVDSDDDVGFEAQESESLKGALGSLKSYMARMDQELAHTSMGRSFTTRERLNKDPPSHTANDNSDEEDSGAGDCAVEAVDVDLNLISNILESYSSQAGLAGPASNLLHSMGVRLPDNADHNPQVSQ.

The interval 439 to 641 (GPQKEELQNY…NADHNPQVSQ (203 aa)) is transcription activation. Residues 481-497 (ITFDADSFLNYFDKILG) form an involved in nuclear export region. Disordered stretches follow at residues 499-521 (KPQE…DSDD) and 554-586 (TSMG…DSGA). The segment at 502–531 (ESDSEDDPGEEDVEGVDSDDDVGFEAQESE) is acidic region required for transactivation activity. A phosphoserine mark is found at S503, S505, and S519. A compositionally biased stretch (acidic residues) spans 503–521 (SDSEDDPGEEDVEGVDSDD). Residues 561–571 (TTRERLNKDPP) show a composition bias toward basic and acidic residues.

The protein belongs to the ECD family. In terms of assembly, interacts with TP53, MDM2, TXNIP. Interacts (phosphorylated) with PIH1D1. Interacts with RUVBL1 mediating the PIH1D1-independent association with the R2TP complex. Interacts with RB1, RBL1 and RBL2; ECD competes with E2F1 for binding to hypophospshorylated RB1. Interacts with EP300. Interacts with DDX39A. Post-translationally, phosphorylated predominantly by CK2 on two serine-containing clusters; involved in cell cycle regulation activity.

Its subcellular location is the cytoplasm. The protein localises to the nucleus. Functionally, regulator of p53/TP53 stability and function. Inhibits MDM2-mediated degradation of p53/TP53 possibly by cooperating in part with TXNIP. May be involved transcriptional regulation. In vitro has intrinsic transactivation activity enhanced by EP300. May be a transcriptional activator required for the expression of glycolytic genes. Involved in regulation of cell cycle progression. Proposed to disrupt Rb-E2F binding leading to transcriptional activation of E2F proteins. The cell cycle -regulating function may depend on its RUVBL1-mediated association with the R2TP complex. May play a role in regulation of pre-mRNA splicing. Participates together with DDX39A in mRNA nuclear export. The chain is Protein ecdysoneless homolog (Ecd) from Mus musculus (Mouse).